Reading from the N-terminus, the 98-residue chain is uncharacterized protein (98 aa).

One can recognise an HTH cro/C1-type domain in the interval 37–91; the sequence is LITSRQQLGISQKQLETLSGVKQPMIARIEKGQTNPQLETLLKLLAPLGKTLSIV. The segment at residues 48–67 is a DNA-binding region (H-T-H motif); sequence QKQLETLSGVKQPMIARIEK.

This is an uncharacterized protein from Haemophilus influenzae (strain ATCC 51907 / DSM 11121 / KW20 / Rd).